The primary structure comprises 380 residues: Cytochrome b (380 aa).

Helical transmembrane passes span 34-54, 78-99, 114-134, and 179-199; these read FGSLLGLCLVSQILTGLFLAM, WLLRNLHANGASFMFICLYMHI, WNIGVMLLVLTMATAFLGYVL, and FFAFHFFLPFMIAGLSVVHLL. Positions 84 and 98 each coordinate heme b. His183 and His197 together coordinate heme b. An a ubiquinone-binding site is contributed by His202. 4 helical membrane passes run 227–247, 289–309, 321–341, and 348–368; these read YKDVVGFVVLLAGLVFIALFS, LGGVVALAMSIVVLFFMPFVH, LAQVLFWLMVVNVLLLTWLGG, and YIFLGQAASVIYFVNILLFIP.

This sequence belongs to the cytochrome b family. The cytochrome bc1 complex contains 3 respiratory subunits (MT-CYB, CYC1 and UQCRFS1), 2 core proteins (UQCRC1 and UQCRC2) and probably 6 low-molecular weight proteins. Heme b is required as a cofactor.

The protein localises to the mitochondrion inner membrane. Functionally, component of the ubiquinol-cytochrome c reductase complex (complex III or cytochrome b-c1 complex) that is part of the mitochondrial respiratory chain. The b-c1 complex mediates electron transfer from ubiquinol to cytochrome c. Contributes to the generation of a proton gradient across the mitochondrial membrane that is then used for ATP synthesis. The sequence is that of Cytochrome b (MT-CYB) from Branchiostoma lanceolatum (Common lancelet).